Reading from the N-terminus, the 245-residue chain is Pyridoxine 5'-phosphate synthase (245 aa).

Asn-7 lines the 3-amino-2-oxopropyl phosphate pocket. 9–10 (DH) serves as a coordination point for 1-deoxy-D-xylulose 5-phosphate. Arg-18 provides a ligand contact to 3-amino-2-oxopropyl phosphate. The active-site Proton acceptor is the His-43. Residues Arg-45 and His-50 each contribute to the 1-deoxy-D-xylulose 5-phosphate site. Residue Glu-70 is the Proton acceptor of the active site. Position 100 (Thr-100) interacts with 1-deoxy-D-xylulose 5-phosphate. The active-site Proton donor is the His-190. 3-amino-2-oxopropyl phosphate-binding positions include Gly-191 and 212-213 (GH).

Belongs to the PNP synthase family. In terms of assembly, homooctamer; tetramer of dimers.

The protein resides in the cytoplasm. It carries out the reaction 3-amino-2-oxopropyl phosphate + 1-deoxy-D-xylulose 5-phosphate = pyridoxine 5'-phosphate + phosphate + 2 H2O + H(+). It participates in cofactor biosynthesis; pyridoxine 5'-phosphate biosynthesis; pyridoxine 5'-phosphate from D-erythrose 4-phosphate: step 5/5. Its function is as follows. Catalyzes the complicated ring closure reaction between the two acyclic compounds 1-deoxy-D-xylulose-5-phosphate (DXP) and 3-amino-2-oxopropyl phosphate (1-amino-acetone-3-phosphate or AAP) to form pyridoxine 5'-phosphate (PNP) and inorganic phosphate. The protein is Pyridoxine 5'-phosphate synthase of Prochlorococcus marinus (strain NATL2A).